Consider the following 775-residue polypeptide: Acylamino-acid-releasing enzyme 1 (775 aa).

Active-site charge relay system residues include Ser627, Asp718, and His750.

It belongs to the peptidase S9C family. In terms of assembly, homotetramer.

It localises to the cytoplasm. The enzyme catalyses Cleavage of an N-acetyl or N-formyl amino acid from the N-terminus of a polypeptide.. Functionally, catalyzes the hydrolysis of the N-terminal peptide bond of an N-acetylated peptide to generate an N-acetylated amino acid and a peptide with a free N-terminus. In Oryza sativa subsp. japonica (Rice), this protein is Acylamino-acid-releasing enzyme 1.